The following is a 215-amino-acid chain: Orotate phosphoribosyltransferase (215 aa).

Lys26 contributes to the 5-phospho-alpha-D-ribose 1-diphosphate binding site. Position 34–35 (Phe34–Phe35) interacts with orotate. 5-phospho-alpha-D-ribose 1-diphosphate-binding positions include Tyr72–Lys73, Arg99, Lys100, Lys103, His105, and Asp124–Ala132. The orotate site is built by Thr128 and Arg156.

It belongs to the purine/pyrimidine phosphoribosyltransferase family. PyrE subfamily. In terms of assembly, homodimer. Requires Mg(2+) as cofactor.

It carries out the reaction orotidine 5'-phosphate + diphosphate = orotate + 5-phospho-alpha-D-ribose 1-diphosphate. Its pathway is pyrimidine metabolism; UMP biosynthesis via de novo pathway; UMP from orotate: step 1/2. Functionally, catalyzes the transfer of a ribosyl phosphate group from 5-phosphoribose 1-diphosphate to orotate, leading to the formation of orotidine monophosphate (OMP). This Shewanella oneidensis (strain ATCC 700550 / JCM 31522 / CIP 106686 / LMG 19005 / NCIMB 14063 / MR-1) protein is Orotate phosphoribosyltransferase.